The chain runs to 309 residues: Taste receptor type 2 member 8 (309 aa).

The Extracellular portion of the chain corresponds to 1-7 (MFSPADN). A helical membrane pass occupies residues 8-28 (IFIILITGEFILGILGNGYIA). Over 29–50 (LVNWIDWIKKKKISTVDYILTN) the chain is Cytoplasmic. A helical transmembrane segment spans residues 51–71 (LVIARICLISVMVVNGIVIVL). The Extracellular segment spans residues 72-82 (NPDVYTKNKQQ). A helical membrane pass occupies residues 83-103 (IVIFTFWTFANYLNMWITTCL). The Cytoplasmic segment spans residues 104–131 (NVFYFLKIASSSHPLFLWLKWKIDMVVH). Residues 132-152 (WILLGCFAISLLVSLIAAIVL) form a helical membrane-spanning segment. At 153–184 (SCDYRFHAIAKHKRNITEMFHVSKXPYFEPLT) the chain is on the extracellular side. N-linked (GlcNAc...) asparagine glycosylation is present at Asn167. Residues 185-205 (LFNLFAIVPFIVSLISFFLLV) form a helical membrane-spanning segment. The Cytoplasmic segment spans residues 206–239 (RSLWRHTKQIKLYATGSRDPSTEVHVRAIKTMTS). The helical transmembrane segment at 240–260 (FIFFFFLYFISSILMTFSYLM) threads the bilayer. The Extracellular segment spans residues 261 to 266 (TKYKLA). A helical membrane pass occupies residues 267–287 (VEFGEIAAILYPLGHSLILIV). Residues 288-309 (LNNKLRQIFVRMLTCRKIACVI) lie on the Cytoplasmic side of the membrane.

It belongs to the G-protein coupled receptor T2R family.

Its subcellular location is the membrane. Functionally, receptor that may play a role in the perception of bitterness and is gustducin-linked. May play a role in sensing the chemical composition of the gastrointestinal content. The activity of this receptor may stimulate alpha gustducin, mediate PLC-beta-2 activation and lead to the gating of TRPM5. The sequence is that of Taste receptor type 2 member 8 (TAS2R8) from Pan paniscus (Pygmy chimpanzee).